A 700-amino-acid polypeptide reads, in one-letter code: Beta-galactosidase BgaB (700 aa).

Residues R122 and N160 each contribute to the substrate site. Residue E161 is the Proton donor of the active site. The active-site Nucleophile is E320. Residues W328 and 368–371 each bind substrate; that span reads EAFH.

The protein belongs to the glycosyl hydrolase 42 family. As to quaternary structure, trimer. Tetramer. The N-terminus is blocked.

The enzyme catalyses Hydrolysis of terminal non-reducing beta-D-galactose residues in beta-D-galactosides.. With respect to regulation, inhibited by high substrate concentrations (100 mg/ml). No effect on activity with various EDTA concentrations (0-1 mM). 20-fold higher activity when cells grown on TOS than when cells grown on galactose, glucose and lactose. Its function is as follows. Involved in the hydrolysis of transgalactooligosaccharides (TOS). Highly active towards Gal(beta1-4)Gal and Gal(beta1-4)-Gal-containing oligosaccharides. Low activity towards Gal(beta1-3)Gal, lactose and Gal(beta1-3)GalOMe. No activity towards Gal(beta1-6)Gal, Gal(beta1-4)Man, Gal(alpha1-4)Gal, Gal(alpha1-3)Gal(beta1-4)Gal, lactulose, 3'fucosyllactose, lacto-N-fucopentaose I, lacto-N-fucopentaose II, cellobiose, maltose or sucrose. No transglycosylation activity is found at high substrate concentrations (100 mg/ml) and only low transglycosylation activity at lower substrate concentrations (10 mg/ml). In Bifidobacterium adolescentis (strain ATCC 15703 / DSM 20083 / NCTC 11814 / E194a), this protein is Beta-galactosidase BgaB (bgaB).